A 210-amino-acid polypeptide reads, in one-letter code: Uridine kinase (210 aa).

12-19 (GGSGGGKT) lines the ATP pocket.

It belongs to the uridine kinase family.

It is found in the cytoplasm. It carries out the reaction uridine + ATP = UMP + ADP + H(+). The enzyme catalyses cytidine + ATP = CMP + ADP + H(+). The protein operates within pyrimidine metabolism; CTP biosynthesis via salvage pathway; CTP from cytidine: step 1/3. It functions in the pathway pyrimidine metabolism; UMP biosynthesis via salvage pathway; UMP from uridine: step 1/1. The sequence is that of Uridine kinase from Streptococcus uberis (strain ATCC BAA-854 / 0140J).